Here is a 379-residue protein sequence, read N- to C-terminus: Lipoyl synthase, mitochondrial (379 aa).

Residues Cys94, Cys99, Cys105, Cys126, Cys130, Cys133, and Ser342 each contribute to the [4Fe-4S] cluster site. The Radical SAM core domain maps to 109 to 331 (GEDNGAATAT…EKEAMSMGFL (223 aa)).

It belongs to the radical SAM superfamily. Lipoyl synthase family. It depends on [4Fe-4S] cluster as a cofactor.

Its subcellular location is the mitochondrion. The enzyme catalyses [[Fe-S] cluster scaffold protein carrying a second [4Fe-4S](2+) cluster] + N(6)-octanoyl-L-lysyl-[protein] + 2 oxidized [2Fe-2S]-[ferredoxin] + 2 S-adenosyl-L-methionine + 4 H(+) = [[Fe-S] cluster scaffold protein] + N(6)-[(R)-dihydrolipoyl]-L-lysyl-[protein] + 4 Fe(3+) + 2 hydrogen sulfide + 2 5'-deoxyadenosine + 2 L-methionine + 2 reduced [2Fe-2S]-[ferredoxin]. It participates in protein modification; protein lipoylation via endogenous pathway; protein N(6)-(lipoyl)lysine from octanoyl-[acyl-carrier-protein]: step 2/2. Its function is as follows. Catalyzes the radical-mediated insertion of two sulfur atoms into the C-6 and C-8 positions of the octanoyl moiety bound to the lipoyl domains of lipoate-dependent enzymes, thereby converting the octanoylated domains into lipoylated derivatives. The polypeptide is Lipoyl synthase, mitochondrial (Leishmania braziliensis).